Reading from the N-terminus, the 184-residue chain is dITP/XTP pyrophosphatase (184 aa).

5 to 10 (SSNRHK) provides a ligand contact to substrate. Mg(2+)-binding residues include glutamate 33 and aspartate 62. Aspartate 62 acts as the Proton acceptor in catalysis. Substrate contacts are provided by residues serine 63, 136–139 (WGFD), lysine 158, and 163–164 (HR).

It belongs to the HAM1 NTPase family. Homodimer. The cofactor is Mg(2+).

The enzyme catalyses XTP + H2O = XMP + diphosphate + H(+). It catalyses the reaction dITP + H2O = dIMP + diphosphate + H(+). It carries out the reaction ITP + H2O = IMP + diphosphate + H(+). In terms of biological role, pyrophosphatase that catalyzes the hydrolysis of nucleoside triphosphates to their monophosphate derivatives, with a high preference for the non-canonical purine nucleotides XTP (xanthosine triphosphate), dITP (deoxyinosine triphosphate) and ITP. Seems to function as a house-cleaning enzyme that removes non-canonical purine nucleotides from the nucleotide pool, thus preventing their incorporation into DNA/RNA and avoiding chromosomal lesions. The protein is dITP/XTP pyrophosphatase of Korarchaeum cryptofilum (strain OPF8).